Consider the following 378-residue polypeptide: Chaperone protein DnaJ (378 aa).

Residues 4–68 (DFYEILGVSR…ETRARYDRFG (65 aa)) form the J domain. The CR-type zinc finger occupies 136-218 (GGEKEIRIPH…CGGAGRKQET (83 aa)). Cys-149, Cys-152, Cys-166, Cys-169, Cys-192, Cys-195, Cys-206, and Cys-209 together coordinate Zn(2+). CXXCXGXG motif repeat units follow at residues 149–156 (CKTCSGSG), 166–173 (CGTCNGTG), 192–199 (CPTCNGEG), and 206–213 (CESCGGAG).

This sequence belongs to the DnaJ family. Homodimer. The cofactor is Zn(2+).

The protein resides in the cytoplasm. Its function is as follows. Participates actively in the response to hyperosmotic and heat shock by preventing the aggregation of stress-denatured proteins and by disaggregating proteins, also in an autonomous, DnaK-independent fashion. Unfolded proteins bind initially to DnaJ; upon interaction with the DnaJ-bound protein, DnaK hydrolyzes its bound ATP, resulting in the formation of a stable complex. GrpE releases ADP from DnaK; ATP binding to DnaK triggers the release of the substrate protein, thus completing the reaction cycle. Several rounds of ATP-dependent interactions between DnaJ, DnaK and GrpE are required for fully efficient folding. Also involved, together with DnaK and GrpE, in the DNA replication of plasmids through activation of initiation proteins. The chain is Chaperone protein DnaJ from Picosynechococcus sp. (strain ATCC 27264 / PCC 7002 / PR-6) (Agmenellum quadruplicatum).